We begin with the raw amino-acid sequence, 1018 residues long: Fibronectin-binding protein A (1018 aa).

The first 36 residues, 1–36, serve as a signal peptide directing secretion; it reads MKNNLRYGIRKHKLGAASVFLGTMIVVGMGQDKEAA. A YSIRK-G/S signaling motif motif is present at residues 7 to 18; it reads YGIRKHKLGAAS. The segment at 37 to 511 is ligand-binding A region; the sequence is ASEQKTTTVE…SNKANGNEKN (475 aa). Disordered stretches follow at residues 38–61 and 78–195; these read SEQKTTTVEENGNSATDNKTSETQ and ATVT…ETGT. 2 stretches are compositionally biased toward polar residues: residues 39-61 and 78-92; these read EQKTTTVEENGNSATDNKTSETQ and ATVTEQPSNATQVTT. Residues 112–126 are compositionally biased toward basic and acidic residues; the sequence is TVKEEVVKEEAKPQV. Polar residues predominate over residues 129-139; that stretch reads TTQSQDNSGDQ. The segment at 194-511 is fibrinogen/elastin/tropoelastin-binding; sequence GTDVTSKVTV…SNKANGNEKN (318 aa). A fibronectin-binding region spans residues 512–872; it reads GPIIQNNKFE…EGQQTIEEDT (361 aa). The stretch at 545–574 is one B-1 repeat; it reads EEYDSSTLDIDYHTAIDGGGGYVDGYIETI. Residues 545–604 form a 2 X approximate tandem repeats region; it reads EEYDSSTLDIDYHTAIDGGGGYVDGYIETIEETDSSAIDIDYHTAVDSEAGHVGGYTESS. One copy of the B-2 repeat lies at 575-604; sequence EETDSSAIDIDYHTAVDSEAGHVGGYTESS. Disordered stretches follow at residues 595–622, 740–813, and 827–997; these read GHVGGYTESSEESNPIDFEESTHENSKH, LGYE…DIDF, and EIIE…GMLF. Residues 745–782 form a D-1 repeat; that stretch reads GQNSGNQSFEEDTEEDKPKYEQGGNIVDIDFDSVPQIH. The interval 745–878 is 4 X approximate tandem repeats, D-3 repeat has more fibronectin-binding activity; sequence GQNSGNQSFE…EEDTTPPIVP (134 aa). The stretch at 783 to 820 is one D-2 repeat; it reads GQNKGNQSFEEDTEKDKPKYEHGGNIIDIDFDSVPHIH. Residues 821–859 form a D-3 repeat; it reads GFNKHTEIIEEDTNKDKPSYQFGGHNSVDFEEDTLPKVS. The segment covering 827–838 has biased composition (basic and acidic residues); it reads EIIEEDTNKDKP. One copy of the D-4; truncated repeat lies at 860–878; it reads GQNEGQQTIEEDTTPPIVP. The segment covering 875 to 938 has biased composition (pro residues); that stretch reads PIVPPTPPTP…PAEPGKPVPP (64 aa). WR repeat units follow at residues 879 to 892, 893 to 906, 907 to 920, 921 to 934, and 935 to 948; these read PTPPTPEVPSEPET, PTPPTPEVPAEPGK, and PVPPAKEEPKKPSK. Residues 879 to 948 form a 5 X tandem repeats, Pro-rich (WR) region; the sequence is PTPPTPEVPS…AKEEPKKPSK (70 aa). The LPXTG sorting signal signature appears at 982–986; sequence LPETG. Position 985 is a pentaglycyl murein peptidoglycan amidated threonine (Thr985). Positions 986 to 1018 are cleaved as a propeptide — removed by sortase; sequence GGEESTNKGMLFGGLFSILGLALLRRNKKNHKA.

It localises to the secreted. Its subcellular location is the cell wall. Its function is as follows. Possesses multiple, substituting fibronectin (Fn) binding regions, each capable of conferring adherence to both soluble and immobilized forms of Fn. This confers to S.aureus the ability to invade endothelial cells both in vivo and in vitro, without requiring additional factors, although in a slow and inefficient way through actin rearrangements in host cells. This invasion process is mediated by integrin alpha-5/beta-1. Promotes bacterial attachment to both soluble and immobilized forms of fibrinogen (Fg) by means of a unique binding site localized within the 17 C-terminal residues of the gamma-chain of human Fg. Both plasma proteins (Fn and Fg) function as a bridge between bacterium and host cell. Promotes attachment to immobilized elastin peptides in a dose-dependent and saturable manner. Promotes attachment to both full-length and segments of immobilized human tropoelastin at multiple sites in a dose and pH-dependent manner. Promotes adherence to and aggregation of activated platelets independently of other S.aureus surface molecules. Is a critical mediator implicated in the induction of experimental endocarditis in rats with catheter-induced aortic vegetations, promoting both colonization and persistence of the bacterium into the host. The sequence is that of Fibronectin-binding protein A (fnbA) from Staphylococcus aureus (strain NCTC 8325 / PS 47).